A 196-amino-acid polypeptide reads, in one-letter code: Nucleoside triphosphate pyrophosphatase (196 aa).

Aspartate 73 functions as the Proton acceptor in the catalytic mechanism.

It belongs to the Maf family. It depends on a divalent metal cation as a cofactor.

It localises to the cytoplasm. It carries out the reaction a ribonucleoside 5'-triphosphate + H2O = a ribonucleoside 5'-phosphate + diphosphate + H(+). The enzyme catalyses a 2'-deoxyribonucleoside 5'-triphosphate + H2O = a 2'-deoxyribonucleoside 5'-phosphate + diphosphate + H(+). Nucleoside triphosphate pyrophosphatase. May have a dual role in cell division arrest and in preventing the incorporation of modified nucleotides into cellular nucleic acids. This is Nucleoside triphosphate pyrophosphatase from Maricaulis maris (strain MCS10) (Caulobacter maris).